Reading from the N-terminus, the 218-residue chain is Zinc finger BED domain-containing protein 2 (218 aa).

Acidic residues predominate over residues 1–11 (MMRREDEEEEG). The segment at 1-24 (MMRREDEEEEGTMMKAKGDLEMKE) is disordered. The BED-type zinc-finger motif lies at 52–113 (TRFSEAWEYF…SMHREELEKS (62 aa)). 4 residues coordinate Zn(2+): Cys-78, Cys-81, His-101, and His-106. Residues 104 to 137 (SMHREELEKSGHGQAGQRQDPRPHGPQLPTGIEG) are disordered. A compositionally biased stretch (basic and acidic residues) spans 105-114 (MHREELEKSG).

As to expression, expressed in keratinocytes.

It localises to the nucleus. In terms of biological role, transcriptional regulator which has intrinsic repressor activity and which competes with the transcriptional activator IRF1 for binding to the 5'-[CA]GAA[AC]C[CT]-3' consensus sequence in gene promoters. May thereby play a role in keratinocyte differentiation. This Homo sapiens (Human) protein is Zinc finger BED domain-containing protein 2 (ZBED2).